The chain runs to 160 residues: Transcriptional repressor NrdR (160 aa).

The segment covering 1–11 (MRCPSCNSLDT) has biased composition (polar residues). The interval 1-20 (MRCPSCNSLDTQVKDSRPTE) is disordered. A zinc finger lies at 3–34 (CPSCNSLDTQVKDSRPTEDSAVIRRRRVCMAC). The ATP-cone domain maps to 49–139 (LTVIKRNGRR…VYRNFREAKD (91 aa)).

The protein belongs to the NrdR family. It depends on Zn(2+) as a cofactor.

Its function is as follows. Negatively regulates transcription of bacterial ribonucleotide reductase nrd genes and operons by binding to NrdR-boxes. In Nitrobacter winogradskyi (strain ATCC 25391 / DSM 10237 / CIP 104748 / NCIMB 11846 / Nb-255), this protein is Transcriptional repressor NrdR.